We begin with the raw amino-acid sequence, 160 residues long: MITKRKKKSYTSVYALGQYISMSAHKARRVIDQIRGRSYEEALMILELMPYRGCYPIFKLVYSAAANASHNKGFKETNLVISKAEVNQGNTVKKLKPRARGRSYPIKRSTCHITIVLEDISFYQQYEEYLMYLKKPGCSNENRNLTCYDTYSSGGLWDKK.

Belongs to the universal ribosomal protein uL22 family. In terms of assembly, part of the 50S ribosomal subunit.

It is found in the plastid. Its subcellular location is the chloroplast. In terms of biological role, this protein binds specifically to 23S rRNA. The globular domain of the protein is located near the polypeptide exit tunnel on the outside of the subunit, while an extended beta-hairpin is found that lines the wall of the exit tunnel in the center of the 70S ribosome. The chain is Large ribosomal subunit protein uL22c (rpl22) from Crucihimalaya wallichii (Rock-cress).